Here is an 85-residue protein sequence, read N- to C-terminus: UPF0335 protein Plav_2034 (85 aa).

Belongs to the UPF0335 family.

The protein is UPF0335 protein Plav_2034 of Parvibaculum lavamentivorans (strain DS-1 / DSM 13023 / NCIMB 13966).